A 106-amino-acid polypeptide reads, in one-letter code: RxLR effector protein PSR1 (106 aa).

An N-terminal signal peptide occupies residues 1–20 (MRLTYVLLVAVTTLLVSCDA). The RxLR-dEER signature appears at 33-46 (RLLRFVEAADEEER). The segment at 50–106 (FSPEKLRKMLGDETYRLKKFGKWDSDGHTFDGLKHYLLLSDSSMVKLRNMYKAWLEQ) is WY domain. Positions 56 to 69 (RKMLGDETYRLKKF) match the Bipartite nuclear localization signal (NLS) motif.

This sequence belongs to the RxLR effector family. Interacts with host PINP1.

It localises to the secreted. The protein localises to the host nucleus. Secreted effector that possesses RNA silencing suppression activity by inhibiting the biogenesis of small RNAs in the host plant to promote enhanced susceptibility of host to the pathogen during infection. Interferes with secondary siRNA production by associating with host nuclear protein PINP1 that acts as a regulator of the accumulation of both microRNAs and endogenous small interfering RNAs. This is RxLR effector protein PSR1 from Phytophthora sojae (Soybean stem and root rot agent).